The chain runs to 502 residues: 4,4'-diapophytoene desaturase (4,4'-diaponeurosporene-forming) (502 aa).

Position 5 to 17 (5 to 17 (VIGAGVTGLAAAA)) interacts with FAD.

Belongs to the carotenoid/retinoid oxidoreductase family. CrtN subfamily.

It carries out the reaction 15-cis-4,4'-diapophytoene + 3 FAD + 3 H(+) = all-trans-4,4'-diaponeurosporene + 3 FADH2. Its pathway is carotenoid biosynthesis; staphyloxanthin biosynthesis; staphyloxanthin from farnesyl diphosphate: step 2/5. In terms of biological role, involved in the biosynthesis of the yellow-orange carotenoid staphyloxanthin, which plays a role in the virulence via its protective function against oxidative stress. Catalyzes three successive dehydrogenation reactions that lead to the introduction of three double bonds into 4,4'-diapophytoene (dehydrosqualene), with 4,4'-diapophytofluene and 4,4'-diapo-zeta-carotene as intermediates, and 4,4'-diaponeurosporene (the major deep-yellow pigment in staphylococci strains) as the end product. This chain is 4,4'-diapophytoene desaturase (4,4'-diaponeurosporene-forming), found in Staphylococcus aureus (strain USA300).